Consider the following 105-residue polypeptide: Large ribosomal subunit protein bL21 (105 aa).

This sequence belongs to the bacterial ribosomal protein bL21 family. As to quaternary structure, part of the 50S ribosomal subunit. Contacts protein L20.

In terms of biological role, this protein binds to 23S rRNA in the presence of protein L20. This is Large ribosomal subunit protein bL21 from Blochmanniella pennsylvanica (strain BPEN).